A 340-amino-acid chain; its full sequence is DNA-directed RNA polymerase subunit alpha (340 aa).

The segment at M1–N226 is alpha N-terminal domain (alpha-NTD). Residues L243–Y340 form an alpha C-terminal domain (alpha-CTD) region.

This sequence belongs to the RNA polymerase alpha chain family. Homodimer. The RNAP catalytic core consists of 2 alpha, 1 beta, 1 beta' and 1 omega subunit. When a sigma factor is associated with the core the holoenzyme is formed, which can initiate transcription. In terms of processing, the last 19 amino acids in the C-terminal part are cleaved in the spore.

The enzyme catalyses RNA(n) + a ribonucleoside 5'-triphosphate = RNA(n+1) + diphosphate. In terms of biological role, DNA-dependent RNA polymerase catalyzes the transcription of DNA into RNA using the four ribonucleoside triphosphates as substrates. The sequence is that of DNA-directed RNA polymerase subunit alpha from Streptomyces granaticolor.